We begin with the raw amino-acid sequence, 345 residues long: Phenylalanine--tRNA ligase alpha subunit (345 aa).

E255 serves as a coordination point for Mg(2+).

This sequence belongs to the class-II aminoacyl-tRNA synthetase family. Phe-tRNA synthetase alpha subunit type 1 subfamily. In terms of assembly, tetramer of two alpha and two beta subunits. The cofactor is Mg(2+).

Its subcellular location is the cytoplasm. The catalysed reaction is tRNA(Phe) + L-phenylalanine + ATP = L-phenylalanyl-tRNA(Phe) + AMP + diphosphate + H(+). In Lysinibacillus sphaericus (strain C3-41), this protein is Phenylalanine--tRNA ligase alpha subunit.